The chain runs to 164 residues: MTDTFWAFVGLVLFLALLVYFEVPEMVLRHLDTRAKRIKDELDEALRLREEAQEVLAEYQRKHAEAEKDAQEIIAAAKREVEAVISEARIKAEEYVKNRNKLAEQKIAQAEADAIRMVSSSAIDLAVSAARVLIEKELDSHKANELIKESLVQESLTKMKTYLN.

A helical membrane pass occupies residues 4 to 24; the sequence is TFWAFVGLVLFLALLVYFEVP.

It belongs to the ATPase B chain family. F-type ATPases have 2 components, F(1) - the catalytic core - and F(0) - the membrane proton channel. F(1) has five subunits: alpha(3), beta(3), gamma(1), delta(1), epsilon(1). F(0) has three main subunits: a(1), b(2) and c(10-14). The alpha and beta chains form an alternating ring which encloses part of the gamma chain. F(1) is attached to F(0) by a central stalk formed by the gamma and epsilon chains, while a peripheral stalk is formed by the delta and b chains.

Its subcellular location is the cell inner membrane. Functionally, f(1)F(0) ATP synthase produces ATP from ADP in the presence of a proton or sodium gradient. F-type ATPases consist of two structural domains, F(1) containing the extramembraneous catalytic core and F(0) containing the membrane proton channel, linked together by a central stalk and a peripheral stalk. During catalysis, ATP synthesis in the catalytic domain of F(1) is coupled via a rotary mechanism of the central stalk subunits to proton translocation. In terms of biological role, component of the F(0) channel, it forms part of the peripheral stalk, linking F(1) to F(0). This chain is ATP synthase subunit b 2, found in Bartonella henselae (strain ATCC 49882 / DSM 28221 / CCUG 30454 / Houston 1) (Rochalimaea henselae).